We begin with the raw amino-acid sequence, 301 residues long: Probable 2-dehydro-3-deoxy-D-pentonate aldolase YjhH (301 aa).

Residues T46 and Y109 each act as charge relay system in the active site. Residue Y135 is the Proton donor of the active site. K164 functions as the Schiff-base intermediate with substrate in the catalytic mechanism.

The protein belongs to the DapA family.

It is found in the cytoplasm. The enzyme catalyses 2-dehydro-3-deoxy-D-arabinonate = glycolaldehyde + pyruvate. In terms of biological role, functions as a 2-dehydro-3-deoxy-D-pentonate aldolase. The chain is Probable 2-dehydro-3-deoxy-D-pentonate aldolase YjhH (yjhH) from Escherichia coli (strain K12).